Here is a 113-residue protein sequence, read N- to C-terminus: Large ribosomal subunit protein uL22 (113 aa).

The protein belongs to the universal ribosomal protein uL22 family. As to quaternary structure, part of the 50S ribosomal subunit.

Its function is as follows. This protein binds specifically to 23S rRNA; its binding is stimulated by other ribosomal proteins, e.g. L4, L17, and L20. It is important during the early stages of 50S assembly. It makes multiple contacts with different domains of the 23S rRNA in the assembled 50S subunit and ribosome. The globular domain of the protein is located near the polypeptide exit tunnel on the outside of the subunit, while an extended beta-hairpin is found that lines the wall of the exit tunnel in the center of the 70S ribosome. The chain is Large ribosomal subunit protein uL22 from Geobacillus kaustophilus (strain HTA426).